The following is a 257-amino-acid chain: Expansin-A10 (257 aa).

Residues 1–18 form the signal peptide; the sequence is MAPCLLLVLFLLPALATG. Positions 50–163 constitute an Expansin-like EG45 domain; the sequence is GGACGFGDLG…RRVNCLRDGG (114 aa). Residues 173–252 form the Expansin-like CBD domain; it reads FFLTVLISNV…EWDFGKTYTG (80 aa).

It belongs to the expansin family. Expansin A subfamily. In terms of tissue distribution, expressed in panicles and flowers.

It localises to the secreted. The protein resides in the cell wall. It is found in the membrane. Functionally, may cause loosening and extension of plant cell walls by disrupting non-covalent bonding between cellulose microfibrils and matrix glucans. No enzymatic activity has been found. May be required for rapid internodal elongation in deepwater rice during submergence. The polypeptide is Expansin-A10 (EXPA10) (Oryza sativa subsp. japonica (Rice)).